The primary structure comprises 246 residues: MSHINVEKKLNFVNKLNNVNNRVLKIENLALAYDGKRILDNINMFMERGDIITILGPNGGGKTSLVKAIAGINKNYTGNIVLAENTKISYMPQNFSISNLMPITVEYFLLNSSFKRLKKNQSIITETIELAGIGNILKNQVLEISAGQTQLLLLARCLIAEPDLIILDEPVSAMDINARAKFYDIINKIAKKRLVSILMTSHDLNSALPSSDYIICINNTIYCQGKPDEIMKNRTLNEIFSSYAAK.

The 220-residue stretch at 24–243 folds into the ABC transporter domain; that stretch reads LKIENLALAY…RTLNEIFSSY (220 aa). 56–63 contributes to the ATP binding site; sequence GPNGGGKT.

Belongs to the ABC transporter superfamily. Zinc importer (TC 3.A.1.15.5) family. As to quaternary structure, the complex is composed of two ATP-binding proteins (ZnuC), two transmembrane proteins (ZnuB) and a solute-binding protein (ZnuA).

The protein resides in the cell membrane. The enzyme catalyses Zn(2+)(out) + ATP(in) + H2O(in) = Zn(2+)(in) + ADP(in) + phosphate(in) + H(+)(in). Its function is as follows. Part of the ABC transporter complex ZnuABC involved in zinc import. Responsible for energy coupling to the transport system. The chain is Zinc import ATP-binding protein ZnuC from Wolbachia pipientis wMel.